Reading from the N-terminus, the 226-residue chain is RPA-interacting protein A (226 aa).

The segment at Met1–Gly45 is interaction with importin beta. An interaction with RPA1 region spans residues His49–Ser171. The RIP-type zinc-finger motif lies at Cys144–Cys219.

As to quaternary structure, interacts directly with the rpa1 subunit of RPA complex. Interacts with importin beta, but not with importin alpha. Forms a complex with the RPA complex and importin beta, which is dissociated by Ran-GTP.

The protein resides in the nucleus. Its function is as follows. Mediates the import of RPA complex into the nucleus, via its interaction with importin beta. This is RPA-interacting protein A (rpain-a) from Xenopus laevis (African clawed frog).